The primary structure comprises 92 residues: Small ribosomal subunit protein uS19c (92 aa).

It belongs to the universal ribosomal protein uS19 family.

It localises to the plastid. It is found in the chloroplast. In terms of biological role, protein S19 forms a complex with S13 that binds strongly to the 16S ribosomal RNA. This chain is Small ribosomal subunit protein uS19c, found in Coffea arabica (Arabian coffee).